A 386-amino-acid polypeptide reads, in one-letter code: 5-hydroxytryptamine receptor 1B (386 aa).

Residues 1-42 (MEEQGIQCAPPPPAASQTGVPLVNLSHNCSAESHIYQDSIAL) lie on the Extracellular side of the membrane. 2 N-linked (GlcNAc...) asparagine glycosylation sites follow: Asn24 and Asn28. The helical transmembrane segment at 43–68 (PWKVLLVALLALITLATTLSNAFVIA) threads the bilayer. Residues 69 to 82 (TVYRTRKLHTPANY) lie on the Cytoplasmic side of the membrane. The chain crosses the membrane as a helical span at residues 83-107 (LIASLAVTDLLVSILVMPVSTMYTV). Residues 108–115 (TGRWTLGQ) lie on the Extracellular side of the membrane. A helical transmembrane segment spans residues 116-141 (VVCDFWLSSDITCCTASIMHLCVIAL). Cys118 and Cys195 are oxidised to a cystine. Positions 125 and 130 each coordinate ergotamine. Residues 142–144 (DRY) carry the DRY motif; important for ligand-induced conformation changes and signaling motif. Residues 142-161 (DRYWAITDAVEYAAKRTPKR) lie on the Cytoplasmic side of the membrane. A helical membrane pass occupies residues 162–180 (AAIMIALVWVFSISISLPP). At 181–201 (FFWRQAKAEEEVLTCLVNTDH) the chain is on the extracellular side. An ergotamine-binding site is contributed by Val197. A helical transmembrane segment spans residues 202–225 (VLYTVYSTGGAFYLPTLLLIALYG). Over 226-311 (RIYVEARSRI…AARERKATKT (86 aa)) the chain is Cytoplasmic. Residues 255–268 (DSPGSTTSVTSINS) are compositionally biased toward polar residues. A disordered region spans residues 255–278 (DSPGSTTSVTSINSRAPDLPSESG). Residues 312 to 333 (LGIILGAFIVCWLPFFIISLVM) form a helical membrane-spanning segment. Topologically, residues 334–343 (PICKDACWFH) are extracellular. Residues 344–366 (MATLDFFNWLGYLNSLINPIIYT) traverse the membrane as a helical segment. The NPxxY motif; important for ligand-induced conformation changes and signaling signature appears at 361–365 (NPIIY). The Cytoplasmic segment spans residues 367 to 386 (MSNEDFKQAFHKLIRFKCAG). Cys384 carries the S-palmitoyl cysteine lipid modification.

Belongs to the G-protein coupled receptor 1 family. In terms of assembly, homodimer. Heterodimer with HTR1D. Post-translationally, phosphorylated. Desensitization of the receptor may be mediated by its phosphorylation. Palmitoylated.

The protein resides in the cell membrane. Functionally, G-protein coupled receptor for 5-hydroxytryptamine (serotonin). Also functions as a receptor for ergot alkaloid derivatives, various anxiolytic and antidepressant drugs and other psychoactive substances, such as lysergic acid diethylamide (LSD). Ligand binding causes a conformation change that triggers signaling via guanine nucleotide-binding proteins (G proteins) and modulates the activity of downstream effectors, such as adenylate cyclase. HTR1B is coupled to G(i)/G(o) G alpha proteins and mediates inhibitory neurotransmission by inhibiting adenylate cyclase activity. Arrestin family members inhibit signaling via G proteins and mediate activation of alternative signaling pathways. Regulates the release of 5-hydroxytryptamine, dopamine and acetylcholine in the brain, and thereby affects neural activity, nociceptive processing, pain perception, mood and behavior. Besides, plays a role in vasoconstriction of cerebral arteries. The polypeptide is 5-hydroxytryptamine receptor 1B (HTR1B) (Cricetulus griseus (Chinese hamster)).